The chain runs to 268 residues: Tryptophan synthase alpha chain (268 aa).

Catalysis depends on proton acceptor residues Glu-49 and Asp-60.

This sequence belongs to the TrpA family. Tetramer of two alpha and two beta chains.

The catalysed reaction is (1S,2R)-1-C-(indol-3-yl)glycerol 3-phosphate + L-serine = D-glyceraldehyde 3-phosphate + L-tryptophan + H2O. The protein operates within amino-acid biosynthesis; L-tryptophan biosynthesis; L-tryptophan from chorismate: step 5/5. Functionally, the alpha subunit is responsible for the aldol cleavage of indoleglycerol phosphate to indole and glyceraldehyde 3-phosphate. The polypeptide is Tryptophan synthase alpha chain (Haemophilus influenzae (strain PittGG)).